The primary structure comprises 93 residues: Ferredoxin-2 (93 aa).

The 90-residue stretch at 2-91 folds into the 2Fe-2S ferredoxin-type domain; it reads YKVTLKTPDG…DVVIETHKED (90 aa). Positions 37, 42, 45, and 75 each coordinate [2Fe-2S] cluster.

It belongs to the 2Fe2S plant-type ferredoxin family. Requires [2Fe-2S] cluster as cofactor.

The protein resides in the plastid. It localises to the chloroplast. Ferredoxins are iron-sulfur proteins that transfer electrons in a wide variety of metabolic reactions. This is Ferredoxin-2 from Equisetum arvense (Field horsetail).